The chain runs to 119 residues: Ribonuclease P protein component (119 aa).

This sequence belongs to the RnpA family. In terms of assembly, consists of a catalytic RNA component (M1 or rnpB) and a protein subunit.

It catalyses the reaction Endonucleolytic cleavage of RNA, removing 5'-extranucleotides from tRNA precursor.. Its function is as follows. RNaseP catalyzes the removal of the 5'-leader sequence from pre-tRNA to produce the mature 5'-terminus. It can also cleave other RNA substrates such as 4.5S RNA. The protein component plays an auxiliary but essential role in vivo by binding to the 5'-leader sequence and broadening the substrate specificity of the ribozyme. The polypeptide is Ribonuclease P protein component (Streptococcus pyogenes serotype M12 (strain MGAS2096)).